Here is a 78-residue protein sequence, read N- to C-terminus: MARVCQITGKRPVTGNNVSHAHNKTRRRFLPNLHSHRFWVESENRWVRLRISSKGLRIIDKKGIDAVLADLRARGEKV.

The protein belongs to the bacterial ribosomal protein bL28 family.

The sequence is that of Large ribosomal subunit protein bL28 from Thioalkalivibrio sulfidiphilus (strain HL-EbGR7).